Consider the following 308-residue polypeptide: Elongation factor Ts (308 aa).

The segment at 80 to 83 is involved in Mg(2+) ion dislocation from EF-Tu; sequence TDFV.

It belongs to the EF-Ts family.

Its subcellular location is the cytoplasm. Functionally, associates with the EF-Tu.GDP complex and induces the exchange of GDP to GTP. It remains bound to the aminoacyl-tRNA.EF-Tu.GTP complex up to the GTP hydrolysis stage on the ribosome. The sequence is that of Elongation factor Ts from Parvibaculum lavamentivorans (strain DS-1 / DSM 13023 / NCIMB 13966).